Reading from the N-terminus, the 407-residue chain is Divalent metal cation transporter MntH (407 aa).

Transmembrane regions (helical) follow at residues 16-36 (LTLL…GNFA), 43-63 (STFG…AMLV), 95-115 (WVQA…GAAV), 119-139 (LLLG…TWGI), 152-172 (FVVG…LVFS), 193-213 (AVYL…IYLH), 239-259 (IAMT…AAAF), 288-308 (LFGL…TLAG), 318-338 (FTIP…VVIA), 346-366 (ILVL…IPLL), and 387-407 (VGRL…VAMI).

The protein belongs to the NRAMP family.

It localises to the cell inner membrane. Functionally, h(+)-stimulated, divalent metal cation uptake system. The sequence is that of Divalent metal cation transporter MntH from Aeromonas hydrophila subsp. hydrophila (strain ATCC 7966 / DSM 30187 / BCRC 13018 / CCUG 14551 / JCM 1027 / KCTC 2358 / NCIMB 9240 / NCTC 8049).